The chain runs to 377 residues: Protein RecA (377 aa).

Residue G65 to T72 participates in ATP binding. Residues G329 to K377 form a disordered region. Basic and acidic residues predominate over residues T339–A361.

Belongs to the RecA family.

The protein resides in the cytoplasm. In terms of biological role, can catalyze the hydrolysis of ATP in the presence of single-stranded DNA, the ATP-dependent uptake of single-stranded DNA by duplex DNA, and the ATP-dependent hybridization of homologous single-stranded DNAs. It interacts with LexA causing its activation and leading to its autocatalytic cleavage. In Levilactobacillus brevis (strain ATCC 367 / BCRC 12310 / CIP 105137 / JCM 1170 / LMG 11437 / NCIMB 947 / NCTC 947) (Lactobacillus brevis), this protein is Protein RecA.